A 181-amino-acid polypeptide reads, in one-letter code: Peptide deformylase (181 aa).

Fe cation-binding residues include Cys-103 and His-145. Glu-146 is a catalytic residue. His-149 is a binding site for Fe cation.

This sequence belongs to the polypeptide deformylase family. The cofactor is Fe(2+).

It catalyses the reaction N-terminal N-formyl-L-methionyl-[peptide] + H2O = N-terminal L-methionyl-[peptide] + formate. Its function is as follows. Removes the formyl group from the N-terminal Met of newly synthesized proteins. Requires at least a dipeptide for an efficient rate of reaction. N-terminal L-methionine is a prerequisite for activity but the enzyme has broad specificity at other positions. The protein is Peptide deformylase of Orientia tsutsugamushi (strain Boryong) (Rickettsia tsutsugamushi).